Consider the following 212-residue polypeptide: MIIAIDGPAASGKGTLGKRLAHHYGYRHLDTGVIYRAVAYALMQSGHDLRDEAAAVAAALELDPEKFGDPALKTQKVGEGASIVSAIPRVREVLVNFQRQFAADPPGAVLDGRDIGTVICPHADVKIFVVADPKVRARRRTMEAKARGEAADEAAVLADIIQRDERDKNRPIAPLKPAPDAYLLDNSQLDIEGGVRAAIDIIEAVRAGRSRG.

7–15 serves as a coordination point for ATP; that stretch reads GPAASGKGT.

This sequence belongs to the cytidylate kinase family. Type 1 subfamily.

It is found in the cytoplasm. It carries out the reaction CMP + ATP = CDP + ADP. The catalysed reaction is dCMP + ATP = dCDP + ADP. The sequence is that of Cytidylate kinase from Bradyrhizobium diazoefficiens (strain JCM 10833 / BCRC 13528 / IAM 13628 / NBRC 14792 / USDA 110).